A 134-amino-acid chain; its full sequence is D-dopachrome decarboxylase-like protein (134 aa).

Belongs to the MIF family.

It is found in the cytoplasm. Functionally, may have lyase activity. This Homo sapiens (Human) protein is D-dopachrome decarboxylase-like protein (DDTL).